We begin with the raw amino-acid sequence, 431 residues long: Translation initiation factor 2 subunit gamma (431 aa).

In terms of domain architecture, tr-type G spans 26–223 (QPCVNIGMVG…ALETQIPTPS (198 aa)). The G1 stretch occupies residues 35 to 42 (GHVDHGKT). Residues Asp38, Thr42, Gly63, and Ser65 each coordinate Mg(2+). 38–43 (DHGKTT) is a binding site for GTP. Residues 63 to 67 (GISIR) form a G2 region. Zn(2+) contacts are provided by Cys78, Cys81, Cys93, and Cys96. The interval 110-113 (DAPG) is G3. Residues 166–169 (NKID) and 201–203 (SAQ) each bind GTP. The interval 166–169 (NKID) is G4. The G5 stretch occupies residues 201-203 (SAQ).

This sequence belongs to the TRAFAC class translation factor GTPase superfamily. Classic translation factor GTPase family. EIF2G subfamily. As to quaternary structure, heterotrimer composed of an alpha, a beta and a gamma chain. It depends on Mg(2+) as a cofactor.

The enzyme catalyses GTP + H2O = GDP + phosphate + H(+). Functionally, eIF-2 functions in the early steps of protein synthesis by forming a ternary complex with GTP and initiator tRNA. The polypeptide is Translation initiation factor 2 subunit gamma (Methanosarcina mazei (strain ATCC BAA-159 / DSM 3647 / Goe1 / Go1 / JCM 11833 / OCM 88) (Methanosarcina frisia)).